Reading from the N-terminus, the 246-residue chain is Bis(5'-nucleosyl)-tetraphosphatase PrpE [asymmetrical] (246 aa).

This sequence belongs to the PrpE family. Ni(2+) serves as cofactor.

It carries out the reaction P(1),P(4)-bis(5'-guanosyl) tetraphosphate + H2O = GMP + GTP + 2 H(+). Its function is as follows. Asymmetrically hydrolyzes Ap4p to yield AMP and ATP. This Bacillus cereus (strain AH820) protein is Bis(5'-nucleosyl)-tetraphosphatase PrpE [asymmetrical].